Reading from the N-terminus, the 466-residue chain is Argininosuccinate lyase (466 aa).

It belongs to the lyase 1 family. Argininosuccinate lyase subfamily.

Its subcellular location is the cytoplasm. It catalyses the reaction 2-(N(omega)-L-arginino)succinate = fumarate + L-arginine. It functions in the pathway amino-acid biosynthesis; L-arginine biosynthesis; L-arginine from L-ornithine and carbamoyl phosphate: step 3/3. In Bartonella tribocorum (strain CIP 105476 / IBS 506), this protein is Argininosuccinate lyase.